Consider the following 707-residue polypeptide: Caprin-1 (707 aa).

Low complexity-rich tracts occupy residues 1–15 (MPSATSHSGSGSKSS) and 22–43 (GSSGSEAAAGAAAPASQHPATG). The disordered stretch occupies residues 1–48 (MPSATSHSGSGSKSSGPPPPSGSSGSEAAAGAAAPASQHPATGTGAVQ). Pro-2 carries the N-acetylproline modification. Ser-10 is modified (phosphoserine). The stretch at 58 to 92 (VIDKKLRNLEKKKGKLDDYQERMNKGERLNQDQLD) forms a coiled coil. Phosphoserine is present on Ser-113. The stretch at 123–151 (KTIKKTARREQLMREEAEQKRLKTVLELQ) forms a coiled coil. An Omega-N-methylarginine modification is found at Arg-163. Residues 325–335 (LQQQPQAASPS) are compositionally biased toward low complexity. A disordered region spans residues 325–347 (LQQQPQAASPSVPEPHSLTPVAQ). Phosphoserine occurs at positions 333 and 341. Positions 358–379 (QDLMAQMQGPYNFIQDSMLDFE) are G3BP1-binding. Disordered stretches follow at residues 412–496 (ESRL…AGTS), 526–558 (PANEPETLKQQSQYQATYNQSFSSQPHQVEQTE), and 570–707 (TYHG…QQVN). A compositionally biased stretch (polar residues) spans 431-452 (PLVSSTSEGYTASQPLYQPSHA). Over residues 453–462 (TEQRPQKEPM) the composition is skewed to basic and acidic residues. Over residues 465–474 (IQATISLNTD) the composition is skewed to polar residues. Residues 475–489 (QTTASSSLPAASQPQ) are compositionally biased toward low complexity. Polar residues-rich tracts occupy residues 533 to 552 (LKQQSQYQATYNQSFSSQPH) and 572 to 603 (HGSQDQPHQVPGNHQQPPQQNTGFPRSSQPYY). Position 623 is a phosphotyrosine (Tyr-623). An omega-N-methylarginine mark is found at Arg-624 and Arg-631. Phosphotyrosine is present on residues Tyr-634 and Tyr-637. Position 638 is an omega-N-methylarginine (Arg-638). Residues 640–655 (SFSNTPNSGYSQSQFT) are compositionally biased toward polar residues. 2 O-linked (GlcNAc) serine glycosylation sites follow: Ser-642 and Ser-647. A phosphotyrosine mark is found at Tyr-649, Tyr-660, Tyr-663, and Tyr-668. Composition is skewed to low complexity over residues 674–684 (RGSGQSGPRGA) and 695–707 (NRGMPQMNTQQVN). Arg-696 carries the asymmetric dimethylarginine; alternate modification. At Arg-696 the chain carries Omega-N-methylarginine; alternate.

Belongs to the caprin family. In terms of assembly, may form homomultimers. Interacts with G3BP1; interaction is direct and promotes stress granule formation. Interacts with G3BP2; interaction is direct and promotes stress granule formation. Interacts with PQBP1. Interacts with DDX3X. Interacts (when phosphorylated by EPHA4) with FMR1; interaction with FMR1 promotes formation of a membraneless compartment. Post-translationally, tyrosine phosphorylation by EPHA4 promotes interaction with FMR1 and liquid-liquid phase separation (LLPS) for the formation of a membraneless compartment that concentrates mRNAs with associated regulatory factors. O-glycosylated (O-GlcNAcylated), in a cell cycle-dependent manner. O-glycosylation by OGT inhibit ability to undergo liquid-liquid phase separation (LLPS). As to expression, highest expression in thymus, spleen and brain (at protein level). Lower levels in kidney, muscle and liver (at protein level).

It localises to the cytoplasm. It is found in the cytoplasmic ribonucleoprotein granule. The protein localises to the cytosol. The protein resides in the cell projection. Its subcellular location is the dendrite. It localises to the lamellipodium. Its activity is regulated as follows. Ability to mediate liquid-liquid phase separation is regulated by ATP: moderate concentrations of ATP enhance phase separation, whereas high concentrations of ATP lead to inhibition of phase separation. MRNA-binding protein that acts as a regulator of mRNAs transport, translation and/or stability, and which is involved in neurogenesis, synaptic plasticity in neurons and cell proliferation and migration in multiple cell types. Plays an essential role in cytoplasmic stress granule formation. Acts as an mRNA regulator by mediating formation of some phase-separated membraneless compartment: undergoes liquid-liquid phase separation upon binding to target mRNAs, leading to assemble mRNAs into cytoplasmic ribonucleoprotein granules that concentrate mRNAs with associated regulatory factors. Undergoes liquid-liquid phase separation following phosphorylation and interaction with FMR1, promoting formation of cytoplasmic ribonucleoprotein granules that concentrate mRNAs with factors that inhibit translation and mediate deadenylation of target mRNAs. In these cytoplasmic ribonucleoprotein granules, CAPRIN1 mediates recruitment of CNOT7 deadenylase, leading to mRNA deadenylation and degradation. Binds directly and selectively to MYC and CCND2 mRNAs. In neuronal cells, directly binds to several mRNAs associated with RNA granules, including BDNF, CAMK2A, CREB1, MAP2, NTRK2 mRNAs, as well as to GRIN1 and KPNB1 mRNAs, but not to rRNAs. The polypeptide is Caprin-1 (Caprin1) (Mus musculus (Mouse)).